A 316-amino-acid chain; its full sequence is MPVKIPDNLPAAEILSAENIFVMSETRAAHQDIRPMKVLILNLMPNKIETETQLLRLLGNTPLQVDVDLLRIHDKESRHTSLDHMNTFYRDFEDVRHKNYDGLIITGAPLGQLDFEEVTYWDHIREIIDWSQSHVTSVLFLCWAAHAGLYHLYGLKRELLKTKRSGVFVHSRSCDHHPLLRGFDEEFFAPHSRYAEIPVAQIHAHPALQVLAESDEAGAYLVLSRNSRNLFVIGHPEYQKSTLSDEYHRDLAAGINPEIPQNYFRNDDPAQPPVARWHSHGSLLVSNWLNYYVYQLTPYDLSDMSAITPWEASSKS.

C142 acts as the Acyl-thioester intermediate in catalysis. Positions 163 and 192 each coordinate substrate. The Proton acceptor role is filled by H235. E237 is a catalytic residue. A substrate-binding site is contributed by R249.

Belongs to the MetA family.

Its subcellular location is the cytoplasm. The catalysed reaction is L-homoserine + succinyl-CoA = O-succinyl-L-homoserine + CoA. It functions in the pathway amino-acid biosynthesis; L-methionine biosynthesis via de novo pathway; O-succinyl-L-homoserine from L-homoserine: step 1/1. Transfers a succinyl group from succinyl-CoA to L-homoserine, forming succinyl-L-homoserine. In Shewanella amazonensis (strain ATCC BAA-1098 / SB2B), this protein is Homoserine O-succinyltransferase.